The chain runs to 449 residues: AP-4 complex subunit mu-1 (449 aa).

Positions 184–448 (KNEVFLDVVE…LSHSNAYVIR (265 aa)) constitute an MHD domain.

This sequence belongs to the adaptor complexes medium subunit family. As to quaternary structure, adaptor protein complex 4 (AP-4) is a heterotetramer composed of two large adaptins (epsilon-type subunit AP4E1 and beta-type subunit AP4B1), a medium adaptin (mu-type subunit AP4M1) and a small adaptin (sigma-type AP4S1). Interacts with tyrosine-based sorting signals on the cytoplasmic tail of cargo proteins such as APP, ATG9A, LAMP2 and NAGPA. Interacts with the C-terminal domain of GRID2. Interacts with GRIA1 and GRIA2; the interaction is indirect via CACNG3. Interacts with CACNG3; CACNG3 associates GRIA1 and GRIA2 with the adaptor protein complex 4 (AP-4) to target them to the somatodendritic compartment of neurons. Interacts with HOOK1 and HOOK2; the interactions are direct, mediate the interaction between FTS-Hook-FHIP (FHF) complex and AP-4 and the perinuclear distribution of AP-4.

The protein localises to the golgi apparatus. Its subcellular location is the trans-Golgi network membrane. The protein resides in the early endosome. Component of the adaptor protein complex 4 (AP-4). Adaptor protein complexes are vesicle coat components involved both in vesicle formation and cargo selection. They control the vesicular transport of proteins in different trafficking pathways. AP-4 forms a non clathrin-associated coat on vesicles departing the trans-Golgi network (TGN) and may be involved in the targeting of proteins from the trans-Golgi network (TGN) to the endosomal-lysosomal system. It is also involved in protein sorting to the basolateral membrane in epithelial cells and the proper asymmetric localization of somatodendritic proteins in neurons. Within AP-4, the mu-type subunit AP4M1 is directly involved in the recognition and binding of tyrosine-based sorting signals found in the cytoplasmic part of cargos. The adaptor protein complex 4 (AP-4) may also recognize other types of sorting signal. In Mus musculus (Mouse), this protein is AP-4 complex subunit mu-1.